A 411-amino-acid polypeptide reads, in one-letter code: MTNKTWGGRFKKSLDSSVNQFNASLSFDHVLFDQDINGSQVHVKQLAKQKILTEAECQGIYSALEEIRTEIKQGQYSFNERDEEDIHMFIEQLLIQKIGDLGKKLHTGRSRNDQVALDLRLYTRDKGCLINELLTRLIDCLDDLTSKHQQDLMPGYTHLQQAQPVALGAYFNAYQCMFGRDKSRLDDWFKRMNYSPLGAGALAGSTLPLDREWVAESLGFAGIIPNTLDAVSDRDFVIELCSVAAMIMMHLSRLCEDLILWSTQEFNFVILDDAFATGSSLMPNKKNPDVPELIRGKSGRVYGHLMAILTVMKGLPLAYNKDMQEDKEGLFDTINTIIACLQMITPFLQSLTFNTLLMKTKAQSGYLDATAILESLVMKGMPFRNAHHQVGAWIAEAIEKQCSLNELLKGG.

The protein belongs to the lyase 1 family. Argininosuccinate lyase subfamily.

The protein resides in the cytoplasm. The enzyme catalyses 2-(N(omega)-L-arginino)succinate = fumarate + L-arginine. The protein operates within amino-acid biosynthesis; L-arginine biosynthesis; L-arginine from L-ornithine and carbamoyl phosphate: step 3/3. The sequence is that of Argininosuccinate lyase from Legionella pneumophila (strain Paris).